Here is a 492-residue protein sequence, read N- to C-terminus: Dipeptide permease D (492 aa).

13 helical membrane passes run 14-34 (VVAL…LLIL), 49-69 (ALFS…GYLA), 91-111 (LVLG…AIIV), 138-158 (GGFS…PIAC), 167-187 (WAMG…IFLC), 212-232 (NWGW…VLFW), 236-256 (SVYA…RIYL), 269-289 (LIVV…QGGS), 312-332 (MFQS…AWLV), 344-364 (IWGK…ILTL), 379-399 (LMVL…PVAM), 413-433 (VLTG…AGVI), and 458-478 (VFSQ…VIWL).

It belongs to the major facilitator superfamily. Proton-dependent oligopeptide transporter (POT/PTR) (TC 2.A.17) family. DtpD subfamily.

The protein localises to the cell inner membrane. Its function is as follows. Probable proton-dependent permease that transports dipeptides. The sequence is that of Dipeptide permease D from Klebsiella pneumoniae subsp. pneumoniae (strain ATCC 700721 / MGH 78578).